A 1167-amino-acid polypeptide reads, in one-letter code: DNA-directed RNA polymerase subunit beta (1167 aa).

Positions 1-27 (MAVSPANQATAATTSAESRSEATGIPG) are disordered. A compositionally biased stretch (low complexity) spans 9 to 23 (ATAATTSAESRSEAT).

It belongs to the RNA polymerase beta chain family. The RNAP catalytic core consists of 2 alpha, 1 beta, 1 beta' and 1 omega subunit. When a sigma factor is associated with the core the holoenzyme is formed, which can initiate transcription.

It catalyses the reaction RNA(n) + a ribonucleoside 5'-triphosphate = RNA(n+1) + diphosphate. DNA-dependent RNA polymerase catalyzes the transcription of DNA into RNA using the four ribonucleoside triphosphates as substrates. This Amycolatopsis mediterranei (strain S699) (Nocardia mediterranei) protein is DNA-directed RNA polymerase subunit beta.